The primary structure comprises 70 residues: UPF0519 protein B (70 aa).

This sequence belongs to the UPF0519 family.

This Dictyostelium discoideum (Social amoeba) protein is UPF0519 protein B (sigN122).